Reading from the N-terminus, the 267-residue chain is Glucosamine-6-phosphate deaminase (267 aa).

Asp-72 (proton acceptor; for enolization step) is an active-site residue. Asp-141 serves as the catalytic For ring-opening step. The active-site Proton acceptor; for ring-opening step is the His-143. Glu-148 acts as the For ring-opening step in catalysis.

This sequence belongs to the glucosamine/galactosamine-6-phosphate isomerase family. NagB subfamily.

The enzyme catalyses alpha-D-glucosamine 6-phosphate + H2O = beta-D-fructose 6-phosphate + NH4(+). Its pathway is amino-sugar metabolism; N-acetylneuraminate degradation; D-fructose 6-phosphate from N-acetylneuraminate: step 5/5. Allosterically activated by N-acetylglucosamine 6-phosphate (GlcNAc6P). Catalyzes the reversible isomerization-deamination of glucosamine 6-phosphate (GlcN6P) to form fructose 6-phosphate (Fru6P) and ammonium ion. In Borrelia hermsii (strain HS1 / DAH), this protein is Glucosamine-6-phosphate deaminase.